A 255-amino-acid polypeptide reads, in one-letter code: HLA class II histocompatibility antigen, DQ alpha 2 chain (255 aa).

Positions 1–23 (MILNKALLLGALALTAVMSPCGG) are cleaved as a signal peptide. The interval 24–110 (EDIVADHVAS…RQSNSTAATN (87 aa)) is alpha-1. The Extracellular portion of the chain corresponds to 24 to 217 (EDIVADHVAS…IPAPMSELTE (194 aa)). Asn-104 and Asn-144 each carry an N-linked (GlcNAc...) asparagine glycan. The tract at residues 111–204 (EVPEVTVFSK…GLDEPLLKHW (94 aa)) is alpha-2. The Ig-like C1-type domain occupies 113–205 (PEVTVFSKFP…LDEPLLKHWE (93 aa)). The cysteines at positions 133 and 189 are disulfide-linked. The connecting peptide stretch occupies residues 205 to 217 (EPEIPAPMSELTE). Residues 218-240 (TLVCALGLSVGLMGIVVGTVFII) traverse the membrane as a helical segment. The Cytoplasmic segment spans residues 241–255 (QGLRSVGASRHQGLL).

Belongs to the MHC class II family. In terms of assembly, heterodimer of an alpha and a beta subunit; also referred as MHC class II molecule. Dimer formation with HLA-DQB2, but not with HLA-DQB1, is required for efficient exit from the endoplasmic reticulum (ER). In the ER, forms a heterononamer; 3 MHC class II molecules bind to a CD74 homotrimer (also known as invariant chain or HLA class II histocompatibility antigen gamma chain). In the endosomal/lysosomal system; CD74 undergoes sequential degradation by various proteases; leaving a small fragment termed CLIP on each MHC class II molecule. MHC class II molecule interacts with HLA_DM, and HLA_DO in B-cells, in order to release CLIP and facilitate the binding of antigenic peptides. Association with HLA-DMA also occurs in skin Langerhans cells, in post-Golgi compartments. Restricted to skin Langerhans cells, although some expression at low levels may occur at the surface of B lymphoblastoid cells.

It localises to the cell membrane. The protein localises to the endoplasmic reticulum membrane. The protein resides in the golgi apparatus. Its subcellular location is the trans-Golgi network membrane. It is found in the endosome membrane. It localises to the lysosome membrane. Binds peptides derived from antigens that access the endocytic route of antigen presenting cells (APC) and presents them on the cell surface for recognition by the CD4 T-cells. The peptide binding cleft accommodates peptides of 10-30 residues. The peptides presented by MHC class II molecules are generated mostly by degradation of proteins that access the endocytic route, where they are processed by lysosomal proteases and other hydrolases. Exogenous antigens that have been endocytosed by the APC are thus readily available for presentation via MHC II molecules, and for this reason this antigen presentation pathway is usually referred to as exogenous. As membrane proteins on their way to degradation in lysosomes as part of their normal turn-over are also contained in the endosomal/lysosomal compartments, exogenous antigens must compete with those derived from endogenous components. Autophagy is also a source of endogenous peptides, autophagosomes constitutively fuse with MHC class II loading compartments. In addition to APCs, other cells of the gastrointestinal tract, such as epithelial cells, express MHC class II molecules and CD74 and act as APCs, which is an unusual trait of the GI tract. To produce a MHC class II molecule that presents an antigen, three MHC class II molecules (heterodimers of an alpha and a beta chain) associate with a CD74 trimer in the ER to form a heterononamer. Soon after the entry of this complex into the endosomal/lysosomal system where antigen processing occurs, CD74 undergoes a sequential degradation by various proteases, including CTSS and CTSL, leaving a small fragment termed CLIP (class-II-associated invariant chain peptide). The removal of CLIP is facilitated by HLA-DM via direct binding to the alpha-beta-CLIP complex so that CLIP is released. HLA-DM stabilizes MHC class II molecules until primary high affinity antigenic peptides are bound. The MHC II molecule bound to a peptide is then transported to the cell membrane surface. In B-cells, the interaction between HLA-DM and MHC class II molecules is regulated by HLA-DO. Primary dendritic cells (DCs) also to express HLA-DO. Lysosomal microenvironment has been implicated in the regulation of antigen loading into MHC II molecules, increased acidification produces increased proteolysis and efficient peptide loading. This is HLA class II histocompatibility antigen, DQ alpha 2 chain (HLA-DQA2) from Homo sapiens (Human).